A 68-amino-acid chain; its full sequence is Putative membrane protein insertion efficiency factor (68 aa).

The protein belongs to the UPF0161 family.

It localises to the cell inner membrane. In terms of biological role, could be involved in insertion of integral membrane proteins into the membrane. This Hydrogenobaculum sp. (strain Y04AAS1) protein is Putative membrane protein insertion efficiency factor.